The following is a 161-amino-acid chain: Cyclic pyranopterin monophosphate synthase (161 aa).

Substrate is bound by residues 75–77 and 113–114; these read LCH and ME. The active site involves D128.

This sequence belongs to the MoaC family. As to quaternary structure, homohexamer; trimer of dimers.

The catalysed reaction is (8S)-3',8-cyclo-7,8-dihydroguanosine 5'-triphosphate = cyclic pyranopterin phosphate + diphosphate. It participates in cofactor biosynthesis; molybdopterin biosynthesis. Functionally, catalyzes the conversion of (8S)-3',8-cyclo-7,8-dihydroguanosine 5'-triphosphate to cyclic pyranopterin monophosphate (cPMP). The protein is Cyclic pyranopterin monophosphate synthase of Escherichia coli O139:H28 (strain E24377A / ETEC).